Consider the following 270-residue polypeptide: Formamidopyrimidine-DNA glycosylase (270 aa).

The active-site Schiff-base intermediate with DNA is proline 2. The active-site Proton donor is the glutamate 3. Lysine 58 serves as the catalytic Proton donor; for beta-elimination activity. DNA contacts are provided by histidine 91, arginine 110, and arginine 151. An FPG-type zinc finger spans residues 236–270 (FVYGRGGQPCKVCGTELREVKLGQRASVYCPRCQR). Residue arginine 260 is the Proton donor; for delta-elimination activity of the active site.

This sequence belongs to the FPG family. In terms of assembly, monomer. Requires Zn(2+) as cofactor.

It carries out the reaction Hydrolysis of DNA containing ring-opened 7-methylguanine residues, releasing 2,6-diamino-4-hydroxy-5-(N-methyl)formamidopyrimidine.. The catalysed reaction is 2'-deoxyribonucleotide-(2'-deoxyribose 5'-phosphate)-2'-deoxyribonucleotide-DNA = a 3'-end 2'-deoxyribonucleotide-(2,3-dehydro-2,3-deoxyribose 5'-phosphate)-DNA + a 5'-end 5'-phospho-2'-deoxyribonucleoside-DNA + H(+). Involved in base excision repair of DNA damaged by oxidation or by mutagenic agents. Acts as a DNA glycosylase that recognizes and removes damaged bases. Has a preference for oxidized purines, such as 7,8-dihydro-8-oxoguanine (8-oxoG). Has AP (apurinic/apyrimidinic) lyase activity and introduces nicks in the DNA strand. Cleaves the DNA backbone by beta-delta elimination to generate a single-strand break at the site of the removed base with both 3'- and 5'-phosphates. This chain is Formamidopyrimidine-DNA glycosylase, found in Pseudomonas putida (strain ATCC 700007 / DSM 6899 / JCM 31910 / BCRC 17059 / LMG 24140 / F1).